A 400-amino-acid polypeptide reads, in one-letter code: Formate-dependent phosphoribosylglycinamide formyltransferase (400 aa).

Residues 22-23 (EL) and E82 each bind N(1)-(5-phospho-beta-D-ribosyl)glycinamide. ATP is bound by residues R115, K157, 162-167 (SSGKGQ), 197-200 (EGFI), and E205. Positions 120-315 (RLAAETLGLP…EFELHARAIL (196 aa)) constitute an ATP-grasp domain. Mg(2+) contacts are provided by E274 and E286. Residues D293, K362, and 369–370 (RR) contribute to the N(1)-(5-phospho-beta-D-ribosyl)glycinamide site.

It belongs to the PurK/PurT family. As to quaternary structure, homodimer.

The catalysed reaction is N(1)-(5-phospho-beta-D-ribosyl)glycinamide + formate + ATP = N(2)-formyl-N(1)-(5-phospho-beta-D-ribosyl)glycinamide + ADP + phosphate + H(+). Its pathway is purine metabolism; IMP biosynthesis via de novo pathway; N(2)-formyl-N(1)-(5-phospho-D-ribosyl)glycinamide from N(1)-(5-phospho-D-ribosyl)glycinamide (formate route): step 1/1. Its function is as follows. Involved in the de novo purine biosynthesis. Catalyzes the transfer of formate to 5-phospho-ribosyl-glycinamide (GAR), producing 5-phospho-ribosyl-N-formylglycinamide (FGAR). Formate is provided by PurU via hydrolysis of 10-formyl-tetrahydrofolate. The sequence is that of Formate-dependent phosphoribosylglycinamide formyltransferase from Cupriavidus metallidurans (strain ATCC 43123 / DSM 2839 / NBRC 102507 / CH34) (Ralstonia metallidurans).